A 664-amino-acid chain; its full sequence is Frizzled-3 (664 aa).

Residues 1–16 (MAAYLISFIWVSVILA) form the signal peptide. Residues 17 to 204 (QKSMGHSLFA…REELSFARYF (188 aa)) lie on the Extracellular side of the membrane. Positions 22-135 (HSLFACEPIT…CSRFPDCDEP (114 aa)) constitute an FZ domain. Disulfide bonds link cysteine 27–cysteine 88, cysteine 35–cysteine 81, cysteine 72–cysteine 109, cysteine 98–cysteine 132, and cysteine 102–cysteine 126. An N-linked (GlcNAc...) asparagine glycan is attached at asparagine 41. Residues 205-225 (IGVISIVCLSATLFTFLTFLI) form a helical membrane-spanning segment. Residues 226–236 (DVTRFRYPERP) are Cytoplasmic-facing. Residues 237–257 (IIFYAVCYMMVSLIFFIGFLL) traverse the membrane as a helical segment. The Extracellular portion of the chain corresponds to 258 to 287 (EDKVACNGANPSQYKASTVTQGSHNKACTM). The helical transmembrane segment at 288-308 (LFMVLYFFTMAGSVWWVILTI) threads the bilayer. At 309–327 (TWFLAAVPKWGSEAIEKKA) the chain is on the cytoplasmic side. A helical transmembrane segment spans residues 328–348 (LLFHASAWGIPGTLTIILLAM). The Extracellular segment spans residues 349–373 (NKIEGDNISGVCFVGLYDVHALRYF). Asparagine 355 is a glycosylation site (N-linked (GlcNAc...) asparagine). The chain crosses the membrane as a helical span at residues 374–394 (VLAPLCLDVVVGVSLLLAGII). Topologically, residues 395-419 (SLNRVRIEIPLEKENQDKLVKFMIR) are cytoplasmic. A helical membrane pass occupies residues 420–440 (IGVFSILYLVPLLVVIGCYFY). Over 441 to 476 (EQAYRGVWETTWVQERCREYHIPCPYKVTQTSRPDL) the chain is Extracellular. The chain crosses the membrane as a helical span at residues 477-497 (ILFLMKYLMLLVVGIPSVFWV). The Cytoplasmic portion of the chain corresponds to 498–664 (GSKKTCFEWA…RVIEADATSA (167 aa)). The Lys-Thr-X-X-X-Trp motif, mediates interaction with the PDZ domain of Dvl family members motif lies at 501–506 (KTCFEW). The segment at 537 to 664 (RDPNTPIVRK…RVIEADATSA (128 aa)) is disordered. Composition is skewed to polar residues over residues 549–564 (GTSTQGTSTHASSTQL) and 573–585 (KAGSVQSKVSSYH).

Belongs to the G-protein coupled receptor Fz/Smo family. In terms of tissue distribution, expression restricted to the early nervous system.

The protein localises to the membrane. Its subcellular location is the cell membrane. It is found in the cell surface. The protein resides in the apical cell membrane. Its function is as follows. Receptor for Wnt proteins. Most of frizzled receptors are coupled to the beta-catenin canonical signaling pathway, which leads to the activation of disheveled proteins, inhibition of GSK-3 kinase, nuclear accumulation of beta-catenin and activation of Wnt target genes. A second signaling pathway involving PKC and calcium fluxes has been seen for some family members, but it is not yet clear if it represents a distinct pathway or if it can be integrated in the canonical pathway, as PKC seems to be required for Wnt-mediated inactivation of GSK-3 kinase. Both pathways seem to involve interactions with G-proteins. Activated by Wnt8. Involved in transduction and intercellular transmission of polarity information during tissue morphogenesis and/or in differentiated tissues. Plays a role in controlling early axon growth and guidance processes necessary for the formation of a subset of central and peripheral major fiber tracts. Involved in the migration of cranial neural crest cells. May also be implicated in the transmission of sensory information from the trunk and limbs to the brain. Controls commissural sensory axons guidance after midline crossing along the anterior-posterior axis in the developing spinal cord in a Wnt-dependent signaling pathway. Together with FZD6, is involved in the neural tube closure and plays a role in the regulation of the establishment of planar cell polarity (PCP). Promotes neurogenesis by maintaining sympathetic neuroblasts within the cell cycle in a beta-catenin-dependent manner. This is Frizzled-3 (fzd3) from Xenopus laevis (African clawed frog).